A 323-amino-acid chain; its full sequence is Aspartate carbamoyltransferase catalytic subunit (323 aa).

Carbamoyl phosphate-binding residues include R71 and T72. Residue K99 participates in L-aspartate binding. Residues R121, H151, and Q154 each contribute to the carbamoyl phosphate site. L-aspartate contacts are provided by R184 and R239. Residues G280 and P281 each contribute to the carbamoyl phosphate site.

This sequence belongs to the aspartate/ornithine carbamoyltransferase superfamily. ATCase family. In terms of assembly, heterododecamer (2C3:3R2) of six catalytic PyrB chains organized as two trimers (C3), and six regulatory PyrI chains organized as three dimers (R2).

The catalysed reaction is carbamoyl phosphate + L-aspartate = N-carbamoyl-L-aspartate + phosphate + H(+). The protein operates within pyrimidine metabolism; UMP biosynthesis via de novo pathway; (S)-dihydroorotate from bicarbonate: step 2/3. Catalyzes the condensation of carbamoyl phosphate and aspartate to form carbamoyl aspartate and inorganic phosphate, the committed step in the de novo pyrimidine nucleotide biosynthesis pathway. The protein is Aspartate carbamoyltransferase catalytic subunit of Cupriavidus metallidurans (strain ATCC 43123 / DSM 2839 / NBRC 102507 / CH34) (Ralstonia metallidurans).